Reading from the N-terminus, the 268-residue chain is 4-hydroxy-tetrahydrodipicolinate reductase (268 aa).

Residues 8–13 (GACGKM), Asp34, 95–97 (GTT), and 121–124 (APNF) contribute to the NAD(+) site. His151 functions as the Proton donor/acceptor in the catalytic mechanism. A (S)-2,3,4,5-tetrahydrodipicolinate-binding site is contributed by His152. The active-site Proton donor is the Lys155. 161 to 162 (GT) provides a ligand contact to (S)-2,3,4,5-tetrahydrodipicolinate.

Belongs to the DapB family.

It localises to the cytoplasm. It catalyses the reaction (S)-2,3,4,5-tetrahydrodipicolinate + NAD(+) + H2O = (2S,4S)-4-hydroxy-2,3,4,5-tetrahydrodipicolinate + NADH + H(+). It carries out the reaction (S)-2,3,4,5-tetrahydrodipicolinate + NADP(+) + H2O = (2S,4S)-4-hydroxy-2,3,4,5-tetrahydrodipicolinate + NADPH + H(+). It participates in amino-acid biosynthesis; L-lysine biosynthesis via DAP pathway; (S)-tetrahydrodipicolinate from L-aspartate: step 4/4. Its function is as follows. Catalyzes the conversion of 4-hydroxy-tetrahydrodipicolinate (HTPA) to tetrahydrodipicolinate. This chain is 4-hydroxy-tetrahydrodipicolinate reductase, found in Dictyoglomus turgidum (strain DSM 6724 / Z-1310).